The sequence spans 645 residues: Threonine--tRNA ligase (645 aa).

Positions 1–63 constitute a TGS domain; that stretch reads MEQINIQFPD…ETDGSIGIVT (63 aa). The catalytic stretch occupies residues 242-540; it reads DHRKIGKELE…LTEETKGAFP (299 aa). Positions 336, 387, and 517 each coordinate Zn(2+).

This sequence belongs to the class-II aminoacyl-tRNA synthetase family. In terms of assembly, homodimer. It depends on Zn(2+) as a cofactor.

The protein localises to the cytoplasm. The enzyme catalyses tRNA(Thr) + L-threonine + ATP = L-threonyl-tRNA(Thr) + AMP + diphosphate + H(+). Its function is as follows. Catalyzes the attachment of threonine to tRNA(Thr) in a two-step reaction: L-threonine is first activated by ATP to form Thr-AMP and then transferred to the acceptor end of tRNA(Thr). Also edits incorrectly charged L-seryl-tRNA(Thr). In Staphylococcus aureus (strain Mu3 / ATCC 700698), this protein is Threonine--tRNA ligase.